We begin with the raw amino-acid sequence, 565 residues long: Dihydroxy-acid dehydratase (565 aa).

Asp80 serves as a coordination point for Mg(2+). Cys121 contacts [2Fe-2S] cluster. Asp122 and Lys123 together coordinate Mg(2+). N6-carboxylysine is present on Lys123. Cys194 contacts [2Fe-2S] cluster. Glu447 contributes to the Mg(2+) binding site. Ser473 acts as the Proton acceptor in catalysis.

It belongs to the IlvD/Edd family. Homodimer. The cofactor is [2Fe-2S] cluster. Mg(2+) is required as a cofactor.

The catalysed reaction is (2R)-2,3-dihydroxy-3-methylbutanoate = 3-methyl-2-oxobutanoate + H2O. It carries out the reaction (2R,3R)-2,3-dihydroxy-3-methylpentanoate = (S)-3-methyl-2-oxopentanoate + H2O. Its pathway is amino-acid biosynthesis; L-isoleucine biosynthesis; L-isoleucine from 2-oxobutanoate: step 3/4. It functions in the pathway amino-acid biosynthesis; L-valine biosynthesis; L-valine from pyruvate: step 3/4. Functionally, functions in the biosynthesis of branched-chain amino acids. Catalyzes the dehydration of (2R,3R)-2,3-dihydroxy-3-methylpentanoate (2,3-dihydroxy-3-methylvalerate) into 2-oxo-3-methylpentanoate (2-oxo-3-methylvalerate) and of (2R)-2,3-dihydroxy-3-methylbutanoate (2,3-dihydroxyisovalerate) into 2-oxo-3-methylbutanoate (2-oxoisovalerate), the penultimate precursor to L-isoleucine and L-valine, respectively. The chain is Dihydroxy-acid dehydratase from Chlorobium phaeovibrioides (strain DSM 265 / 1930) (Prosthecochloris vibrioformis (strain DSM 265)).